Reading from the N-terminus, the 554-residue chain is Hydroxylamine reductase (554 aa).

Residues C3, C6, C18, and C25 each coordinate [2Fe-2S] cluster. 8 residues coordinate hybrid [4Fe-2O-2S] cluster: H252, E276, C320, C408, C436, C461, E495, and K497. At C408 the chain carries Cysteine persulfide.

Belongs to the HCP family. [2Fe-2S] cluster serves as cofactor. The cofactor is hybrid [4Fe-2O-2S] cluster.

It localises to the cytoplasm. It carries out the reaction A + NH4(+) + H2O = hydroxylamine + AH2 + H(+). Its function is as follows. Catalyzes the reduction of hydroxylamine to form NH(3) and H(2)O. This chain is Hydroxylamine reductase, found in Shewanella putrefaciens (strain CN-32 / ATCC BAA-453).